The primary structure comprises 113 residues: Large ribosomal subunit protein bL19 (113 aa).

The protein belongs to the bacterial ribosomal protein bL19 family.

Its function is as follows. This protein is located at the 30S-50S ribosomal subunit interface and may play a role in the structure and function of the aminoacyl-tRNA binding site. The chain is Large ribosomal subunit protein bL19 from Rhodococcus erythropolis (strain PR4 / NBRC 100887).